A 311-amino-acid chain; its full sequence is ADP-L-glycero-D-manno-heptose-6-epimerase (311 aa).

Residues 10-11 (FI), 31-32 (DD), Lys-38, Lys-53, 75-79 (EGACS), and Asn-92 each bind NADP(+). Tyr-139 serves as the catalytic Proton acceptor. Residue Lys-143 coordinates NADP(+). Position 174 (Asn-174) interacts with substrate. The NADP(+) site is built by Val-175 and Lys-183. The Proton acceptor role is filled by Lys-183. Residues Ser-185, His-192, 206 to 209 (FEGE), Arg-212, and Tyr-275 each bind substrate.

Belongs to the NAD(P)-dependent epimerase/dehydratase family. HldD subfamily. In terms of assembly, homopentamer. NADP(+) is required as a cofactor.

The enzyme catalyses ADP-D-glycero-beta-D-manno-heptose = ADP-L-glycero-beta-D-manno-heptose. Its pathway is nucleotide-sugar biosynthesis; ADP-L-glycero-beta-D-manno-heptose biosynthesis; ADP-L-glycero-beta-D-manno-heptose from D-glycero-beta-D-manno-heptose 7-phosphate: step 4/4. Catalyzes the interconversion between ADP-D-glycero-beta-D-manno-heptose and ADP-L-glycero-beta-D-manno-heptose via an epimerization at carbon 6 of the heptose. In Psychromonas ingrahamii (strain DSM 17664 / CCUG 51855 / 37), this protein is ADP-L-glycero-D-manno-heptose-6-epimerase.